The chain runs to 606 residues: MKVINLIPTLTLTSLIILTLPITMTLLQNNKTNCFLYITKMAVTCAFAISLIPTLLFLQSNQEAYISNWHWMTIQTLKLSLSFKLDFFSLTFMPIALFITWSIMEFSLWYMHSDPHINRFFKYLLLFLITMLILVSANNLLQLFMGWEGVGIMSFLLISWWHGRTDANTAALQAMLYNRIGDMGFIMMMAWFIIHLNSWEFQQIFLTNPKNTTLPLLGLLLASAGKSAQFGLHPWLPSAMEGPTPVSALLHSSTMVMAGVFTLIRFYPLMENNLTIQTSTLCLGAITTLFTAICALTQNDIKKIIALSTSSQLGLMMVTIGINQPHLAFTHMCTHAFFKAMLFLSSGSIIHNLDNEQDIRKMGGLYKTMPITSTAIIIGSLALTGMPFLTGFYSKDPIIETANMSYINTWALLITLIAVSMTASYSTRIIFFALLGQPRYPTLIQVNENNPYLINPIKRLILGSIFMGFFISMNTIPHTTPQMTMPPHLKFMALAVTLLGFTVATELNNMTHNLTFKQPSRMHTFSTTLGYYPTTTHRILPYLSLTMSQNLATTIMDSIWLEKMIPKNLTTMQKTAASLVSNQKGLMKLYFLSFLLSITLGLLITL.

15 consecutive transmembrane segments (helical) span residues 3 to 23, 38 to 58, 87 to 107, 124 to 144, 180 to 200, 216 to 236, 244 to 264, 276 to 296, 304 to 323, 328 to 350, 369 to 389, 404 to 424, 460 to 480, 483 to 503, and 586 to 606; these read VINLIPTLTLTSLIILTLPIT, ITKMAVTCAFAISLIPTLLFL, FFSLTFMPIALFITWSIMEFS, LLLFLITMLILVSANNLLQLF, IGDMGFIMMMAWFIIHLNSWE, LLGLLLASAGKSAQFGLHPWL, TPVSALLHSSTMVMAGVFTLI, IQTSTLCLGAITTLFTAICAL, IIALSTSSQLGLMMVTIGIN, AFTHMCTHAFFKAMLFLSSGSII, MPITSTAIIIGSLALTGMPFL, MSYINTWALLITLIAVSMTAS, LILGSIFMGFFISMNTIPHTT, MTMPPHLKFMALAVTLLGFTV, and LMKLYFLSFLLSITLGLLITL.

It belongs to the complex I subunit 5 family. As to quaternary structure, core subunit of respiratory chain NADH dehydrogenase (Complex I) which is composed of 45 different subunits.

It is found in the mitochondrion inner membrane. The enzyme catalyses a ubiquinone + NADH + 5 H(+)(in) = a ubiquinol + NAD(+) + 4 H(+)(out). Its function is as follows. Core subunit of the mitochondrial membrane respiratory chain NADH dehydrogenase (Complex I) which catalyzes electron transfer from NADH through the respiratory chain, using ubiquinone as an electron acceptor. Essential for the catalytic activity and assembly of complex I. The chain is NADH-ubiquinone oxidoreductase chain 5 (MT-ND5) from Elephas maximus (Indian elephant).